The sequence spans 377 residues: F-box protein At1g11810 (377 aa).

One can recognise an F-box domain in the interval 2 to 48 (TTTMSTLPVVLVDEILARVPITSLRSLRSTCKKWEASSKTNLVGGKA).

This is F-box protein At1g11810 from Arabidopsis thaliana (Mouse-ear cress).